The chain runs to 362 residues: Outer membrane porin F (362 aa).

Positions 1 to 22 (MMKRNILAVIVPALLVAGTANA) are cleaved as a signal peptide. A beta stranded transmembrane segment spans residues 23-28 (AEIYNK). Position 29 (Asp-29) is a topological domain, periplasmic. The beta stranded transmembrane segment at 30-45 (GNKVDLYGKAVGLHYF) threads the bilayer. At 46 to 60 (SKGNGENSYGGNGDM) the chain is on the extracellular side. The chain crosses the membrane as a beta stranded span at residues 61–73 (TYARLGFKGETQI). At 74–75 (NS) the chain is on the periplasmic side. A beta stranded membrane pass occupies residues 76–88 (DLTGYGQWEYNFQ). At 89-104 (GNNSEGADAQTGNKTR) the chain is on the extracellular side. The beta stranded transmembrane segment at 105–113 (LAFAGLKYA) threads the bilayer. Residues 114–115 (DV) lie on the Periplasmic side of the membrane. Residues 116–122 (GSFDYGR) form a beta stranded membrane-spanning segment. The Extracellular portion of the chain corresponds to 123–156 (NYGVVYDALGYTDMLPEFGGDTAYSDDFFVGRVG). The chain crosses the membrane as a beta stranded span at residues 157–163 (GVATYRN). Topologically, residues 164–171 (SNFFGLVD) are periplasmic. Residues 172-181 (GLNFAVQYLG) traverse the membrane as a beta stranded segment. Residues 182 to 193 (KNERDTARRSNG) are Extracellular-facing. The chain crosses the membrane as a beta stranded span at residues 194-204 (DGVGGSISYEY). Residue Glu-205 is a topological domain, periplasmic. A beta stranded membrane pass occupies residues 206 to 217 (GFGIVGAYGAAD). The Extracellular segment spans residues 218-232 (RTNLQEAQPLGNGKK). Residues 233 to 244 (AEQWATGLKYDA) traverse the membrane as a beta stranded segment. Residue Asn-245 is a topological domain, periplasmic. The chain crosses the membrane as a beta stranded span at residues 246–257 (NIYLAANYGETR). At 258-274 (NATPITNKFTNTSGFAN) the chain is on the extracellular side. A beta stranded membrane pass occupies residues 275–287 (KTQDVLLVAQYQF). The Periplasmic portion of the chain corresponds to 288-289 (DF). The chain crosses the membrane as a beta stranded span at residues 290 to 303 (GLRPSIAYTKSKAK). The Extracellular segment spans residues 304-313 (DVEGIGDVDL). A beta stranded membrane pass occupies residues 314–325 (VNYFEVGATYYF). Residues 326 to 327 (NK) are Periplasmic-facing. Residues 328 to 337 (NMSTYVDYII) traverse the membrane as a beta stranded segment. At 338 to 352 (NQIDSDNKLGVGSDD) the chain is on the extracellular side. Residues 353–362 (TVAVGIVYQF) form a beta stranded membrane-spanning segment.

This sequence belongs to the Gram-negative porin family. In terms of assembly, homotrimer. Forms mixed heterotrimers with OmpC and with PhoE; other mixed heterotrimers are also probable. (Microbial infection) Trimeric complexes with colicin E3, BtuB and OmpF can be cross-linked and immunoprecipitated.

The protein localises to the cell outer membrane. In terms of biological role, forms pores that allow passive diffusion of small molecules across the outer membrane. Its function is as follows. (Microbial infection) It is also a receptor for the bacteriophage T2. Is the major receptor for colicin E5. (Microbial infection) Probably translocates colicin E3 (and other A-type colicins) across the outer membrane. Functionally, (Microbial infection) A mixed OmpC-OmpF heterotrimer is the outer membrane receptor for toxin CdiA-EC536 (ECL_04451); polymorphisms in extracellular loops 4 and 5 of OmpC confer susceptibility to CdiA-EC536-mediated toxicity. This is Outer membrane porin F (ompF) from Escherichia coli (strain K12).